The primary structure comprises 218 residues: Adenylate kinase (218 aa).

Position 10 to 15 (10 to 15 (GAGKGT)) interacts with ATP. The segment at 30–59 (STGDMLRAAIAKGTPLGLSAQKIMESGGLV) is NMP. AMP contacts are provided by residues T31, R36, 57-59 (GLV), 85-88 (GFPR), and Q92. The segment at 122-159 (GRRIHQPSGRVYHVVNQPPKNPGVDDITGEPLIQRDDD) is LID. ATP contacts are provided by residues R123 and 132-133 (VY). AMP-binding residues include R156 and R167. G203 is an ATP binding site.

Belongs to the adenylate kinase family. As to quaternary structure, monomer.

It localises to the cytoplasm. The enzyme catalyses AMP + ATP = 2 ADP. It participates in purine metabolism; AMP biosynthesis via salvage pathway; AMP from ADP: step 1/1. Its function is as follows. Catalyzes the reversible transfer of the terminal phosphate group between ATP and AMP. Plays an important role in cellular energy homeostasis and in adenine nucleotide metabolism. The sequence is that of Adenylate kinase from Legionella pneumophila (strain Lens).